We begin with the raw amino-acid sequence, 361 residues long: tRNA/tmRNA (uracil-C(5))-methyltransferase (361 aa).

The S-adenosyl-L-methionine site is built by glutamine 185, tyrosine 213, asparagine 218, glutamate 234, and aspartate 294. Cysteine 319 acts as the Nucleophile in catalysis. The active-site Proton acceptor is glutamate 353.

This sequence belongs to the class I-like SAM-binding methyltransferase superfamily. RNA M5U methyltransferase family. TrmA subfamily.

It catalyses the reaction uridine(54) in tRNA + S-adenosyl-L-methionine = 5-methyluridine(54) in tRNA + S-adenosyl-L-homocysteine + H(+). The enzyme catalyses uridine(341) in tmRNA + S-adenosyl-L-methionine = 5-methyluridine(341) in tmRNA + S-adenosyl-L-homocysteine + H(+). Its function is as follows. Dual-specificity methyltransferase that catalyzes the formation of 5-methyluridine at position 54 (m5U54) in all tRNAs, and that of position 341 (m5U341) in tmRNA (transfer-mRNA). The sequence is that of tRNA/tmRNA (uracil-C(5))-methyltransferase from Azotobacter vinelandii (strain DJ / ATCC BAA-1303).